Reading from the N-terminus, the 432-residue chain is Nuclear pore complex-interacting protein family member B9 (432 aa).

Disordered stretches follow at residues 260 to 280 (RMGRQPPPPTQQHSITDNSLS) and 353 to 420 (SPLP…LRTR). Over residues 270-280 (QQHSITDNSLS) the composition is skewed to polar residues. Over residues 374–402 (EVEKPPKPKRWRVDEVEQSPKPKRQREAE) the composition is skewed to basic and acidic residues. A compositionally biased stretch (basic residues) spans 408 to 420 (KPKRRRLSKLRTR).

The protein belongs to the NPIP family.

This is Nuclear pore complex-interacting protein family member B9 (NPIPB9) from Homo sapiens (Human).